A 339-amino-acid chain; its full sequence is Anthranilate phosphoribosyltransferase (339 aa).

5-phospho-alpha-D-ribose 1-diphosphate-binding positions include glycine 80, 83–84 (GD), threonine 88, 90–93 (NIST), 108–116 (KHGNRSVSS), and serine 120. Glycine 80 lines the anthranilate pocket. Serine 92 contributes to the Mg(2+) binding site. Residue asparagine 111 participates in anthranilate binding. Arginine 166 is an anthranilate binding site. Mg(2+)-binding residues include aspartate 225 and glutamate 226.

This sequence belongs to the anthranilate phosphoribosyltransferase family. Homodimer. Mg(2+) is required as a cofactor.

The enzyme catalyses N-(5-phospho-beta-D-ribosyl)anthranilate + diphosphate = 5-phospho-alpha-D-ribose 1-diphosphate + anthranilate. The protein operates within amino-acid biosynthesis; L-tryptophan biosynthesis; L-tryptophan from chorismate: step 2/5. In terms of biological role, catalyzes the transfer of the phosphoribosyl group of 5-phosphorylribose-1-pyrophosphate (PRPP) to anthranilate to yield N-(5'-phosphoribosyl)-anthranilate (PRA). The chain is Anthranilate phosphoribosyltransferase from Moorella thermoacetica (strain ATCC 39073 / JCM 9320).